We begin with the raw amino-acid sequence, 63 residues long: 2-hydroxymuconate tautomerase (63 aa).

P2 functions as the Proton acceptor; via imino nitrogen in the catalytic mechanism.

The protein belongs to the 4-oxalocrotonate tautomerase family. As to quaternary structure, homohexamer.

It carries out the reaction (2Z,4E)-2-hydroxyhexa-2,4-dienedioate = (3E)-2-oxohex-3-enedioate. It functions in the pathway aromatic compound metabolism; salicylate degradation. Functionally, catalyzes the ketonization of 2-hydroxymuconate stereoselectively to yield 2-oxo-3-hexenedioate. This chain is 2-hydroxymuconate tautomerase (tdnL), found in Pseudomonas putida (Arthrobacter siderocapsulatus).